The primary structure comprises 262 residues: Small ribosomal subunit protein eS1 (262 aa).

The protein belongs to the eukaryotic ribosomal protein eS1 family. In terms of assembly, component of the small ribosomal subunit. Mature ribosomes consist of a small (40S) and a large (60S) subunit. The 40S subunit contains about 33 different proteins and 1 molecule of RNA (18S). The 60S subunit contains about 49 different proteins and 3 molecules of RNA (25S, 5.8S and 5S).

The protein resides in the cytoplasm. This is Small ribosomal subunit protein eS1 from Theileria parva (East coast fever infection agent).